The chain runs to 1303 residues: Zinc finger CCCH domain-containing protein 4 (1303 aa).

A compositionally biased stretch (pro residues) spans 1–33 (MEAAPGTPPPPPSESPPPPSPPPPSTPSPPPCS). A disordered region spans residues 1-388 (MEAAPGTPPP…RDHDKPHQQS (388 aa)). Residues 53 to 73 (DREDGELEEGELEDDGAEETQ) show a composition bias toward acidic residues. Residues threonine 72 and threonine 75 each carry the phosphothreonine modification. Phosphoserine is present on residues serine 76, serine 92, and serine 94. The span at 80–99 (ERSRKEKGEKHHSDSDEEKS) shows a compositional bias: basic and acidic residues. Positions 95 to 128 (DEEKSHRRLKRKRKKEREKEKRRSKKRRKSKHKR) form a coiled coil. Basic residues predominate over residues 100 to 130 (HRRLKRKRKKEREKEKRRSKKRRKSKHKRHA). Over residues 135-144 (DFSDFSDDSD) the composition is skewed to acidic residues. Tyrosine 155 is modified (phosphotyrosine). Acidic residues predominate over residues 194–218 (EDYENEQYGEYEGDEEEDMGKEDYD). Residues 219 to 235 (DFTKELNQYRRAKEGSS) show a composition bias toward basic and acidic residues. Over residues 238–251 (RGSRGRGRGYRGRG) the composition is skewed to basic residues. Residues 252–274 (SRGGSRGRGMGRGSRGRGRGSMG) show a composition bias toward gly residues. Acidic residues predominate over residues 278–304 (PEDEEDFYEEEMDYGESEEPMGDDDYD). The span at 305 to 321 (EYSKELNQYRRSKDSRG) shows a compositional bias: basic and acidic residues. Residues 323-346 (GLSRGRGRGSRGRGKGMGRGRGRG) show a composition bias toward basic residues. The segment covering 358-369 (NDDEDFYDEDMG) has biased composition (acidic residues). The segment covering 377–388 (RSRDHDKPHQQS) has biased composition (basic and acidic residues). C3H1-type zinc fingers lie at residues 390–417 (KKGKVICKYFVEGRCTWGDHCNFSHDIE), 419–446 (PKKRELCKFYITGFCARAENCPYMHGDF), and 447–470 (PCKLYHTTGNCINGDDCMFSHDPL). Positions 486–496 (AEAGAEDEKEV) are enriched in acidic residues. Residues 486–571 (AEAGAEDEKE…HEPLSPQQLQ (86 aa)) form a disordered region. Pro residues-rich tracts occupy residues 507 to 529 (LPKPPPGVGLLPTPPRPPGPQAP) and 539 to 558 (GGPPPPPPPPPPPPGPPQMP). Arginine 601 carries the asymmetric dimethylarginine modification. Pro residues predominate over residues 605 to 624 (PGGPPGPMGPGPNMGPPGPM). Disordered stretches follow at residues 605-685 (PGGP…SGMM), 710-955 (GLLG…PRSQ), and 996-1288 (PPVP…ASLK). Residues 630 to 650 (PDMHPDMHPDMHPDMHADMHA) are compositionally biased toward basic and acidic residues. Pro residues predominate over residues 659–673 (NPGPPMGPGGPPMMP). Composition is skewed to basic and acidic residues over residues 717-739 (DYGHYEELPGEPGEHLFPEHPLE) and 782-795 (ERARRLAESSKQDR). Residues 767–800 (RALYLRIQQKQQEEEERARRLAESSKQDRENEEG) adopt a coiled-coil conformation. 2 positions are modified to phosphoserine: serine 807 and serine 808. Positions 815–843 (SSVTSILKTLRQQTSSRPPASVGELSSSG) are enriched in polar residues. A compositionally biased stretch (basic and acidic residues) spans 860–875 (ADPRLSRDPRLTRHVE). 3 positions are modified to phosphoserine: serine 904, serine 907, and serine 908. Over residues 904–918 (SLHSSPVGPSSSKGS) the composition is skewed to low complexity. Composition is skewed to polar residues over residues 1028 to 1038 (GASTDSSTQGA) and 1053 to 1062 (VNATGSSAAP). The span at 1067 to 1084 (KPSDPRVRKAPTDPRLQK) shows a compositional bias: basic and acidic residues. A compositionally biased stretch (low complexity) spans 1097–1110 (PGPAEAPSPTASPS). Serine 1104 carries the post-translational modification Phosphoserine. Threonine 1106 carries the post-translational modification Phosphothreonine. Phosphoserine is present on residues serine 1108, serine 1110, and serine 1114. Threonine 1118 bears the Phosphothreonine mark. Positions 1129-1139 (GGLGQGGGGGQ) are enriched in gly residues. Residues 1224–1234 (KAAAAPAATTA) are compositionally biased toward low complexity. A compositionally biased stretch (pro residues) spans 1235–1245 (TPPPEGAPPQP). The span at 1259-1268 (VKQTPKTGSG) shows a compositional bias: polar residues. Phosphoserine occurs at positions 1269 and 1275.

Belongs to the suppressor of sable family. Interacts with WDR82.

It is found in the chromosome. Functionally, RNA-binding protein that suppresses transcription of long non-coding RNAs (lncRNAs). LncRNAs are defined as transcripts more than 200 nucleotides that are not translated into protein. Together with WDR82, part of a transcription termination checkpoint that promotes transcription termination of lncRNAs and their subsequent degradation by the exosome. The transcription termination checkpoint is activated by the inefficiently spliced first exon of lncRNAs. The polypeptide is Zinc finger CCCH domain-containing protein 4 (Homo sapiens (Human)).